We begin with the raw amino-acid sequence, 405 residues long: MSASPIADYHAFPDAQGHFGRYGGSFVAETLVGPLQELAQAYDQARQDPAFQAAYDRDLAHYVGRPSPIYHAQRLSDHVGGAQILLKREDLNHTGAHKINNTIGQALLAARMGKKRIIAETGAGQHGVASATVAARLGLECVVYMGATDIERQKINVYRMKLLGATVVPVTSGSATLKDALNEAMRDWVTNVQDTFYIIGTVAGPDPYPRMVRDFNAIVGREAREQMLAEYGRLPDAITACVGGGSNAIGLFHAFLNDRQVEIVGAEAAGDGIHTGRHAASIAAGRPGVLHGNRTYVLCDDDGQIIETHSVSAGLDYPGVGPEHAFLADSGRARYLGITDEEALQAFHLLAHTEGILPALESSHALAQAMKLARERPRDQIVLCNLSGRGDKDVHTIAAREGLVL.

Lys-98 carries the N6-(pyridoxal phosphate)lysine modification.

The protein belongs to the TrpB family. As to quaternary structure, tetramer of two alpha and two beta chains. It depends on pyridoxal 5'-phosphate as a cofactor.

It carries out the reaction (1S,2R)-1-C-(indol-3-yl)glycerol 3-phosphate + L-serine = D-glyceraldehyde 3-phosphate + L-tryptophan + H2O. Its pathway is amino-acid biosynthesis; L-tryptophan biosynthesis; L-tryptophan from chorismate: step 5/5. Its function is as follows. The beta subunit is responsible for the synthesis of L-tryptophan from indole and L-serine. In Stenotrophomonas maltophilia (strain R551-3), this protein is Tryptophan synthase beta chain.